Here is a 151-residue protein sequence, read N- to C-terminus: 4-hydroxybenzoyl-CoA thioesterase (151 aa).

Residue glutamate 73 is part of the active site. A substrate-binding site is contributed by 100 to 102 (FFR).

It belongs to the thioesterase PaaI family. In terms of assembly, homotetramer.

The catalysed reaction is 4-hydroxybenzoyl-CoA + H2O = 4-hydroxybenzoate + CoA + H(+). Its pathway is xenobiotic degradation; 4-chlorobenzoate degradation; 4-hydroxybenzoate from 4-chlorobenzoate: step 3/3. In Arthrobacter globiformis, this protein is 4-hydroxybenzoyl-CoA thioesterase.